The chain runs to 89 residues: Small ribosomal subunit protein uS15 (89 aa).

The segment covering 1–21 (MSITPERKQEMIKDYATKEGD) has biased composition (basic and acidic residues). Residues 1-23 (MSITPERKQEMIKDYATKEGDTG) are disordered.

It belongs to the universal ribosomal protein uS15 family. As to quaternary structure, part of the 30S ribosomal subunit. Forms a bridge to the 50S subunit in the 70S ribosome, contacting the 23S rRNA.

Its function is as follows. One of the primary rRNA binding proteins, it binds directly to 16S rRNA where it helps nucleate assembly of the platform of the 30S subunit by binding and bridging several RNA helices of the 16S rRNA. Functionally, forms an intersubunit bridge (bridge B4) with the 23S rRNA of the 50S subunit in the ribosome. The polypeptide is Small ribosomal subunit protein uS15 (Rhodospirillum rubrum (strain ATCC 11170 / ATH 1.1.1 / DSM 467 / LMG 4362 / NCIMB 8255 / S1)).